A 145-amino-acid polypeptide reads, in one-letter code: MDVLVINGPNLNLLGTRQPQFYGHKTLADINNDLLKIAKENNINIDFYQSNHEGQIIDKIQQTAAKIIIINPAAFTHTSVAIRDAFLAINKPFIEIHLSNIYNREEFRTKSFLSDIAYGCIFGFGPNGYTLALIEAINYINMKGE.

The active-site Proton acceptor is Tyr-22. 3 residues coordinate substrate: Asn-71, His-77, and Asp-84. The Proton donor role is filled by His-97. Substrate contacts are provided by residues 98–99 and Arg-108; that span reads LS.

It belongs to the type-II 3-dehydroquinase family. Homododecamer.

The enzyme catalyses 3-dehydroquinate = 3-dehydroshikimate + H2O. Its pathway is metabolic intermediate biosynthesis; chorismate biosynthesis; chorismate from D-erythrose 4-phosphate and phosphoenolpyruvate: step 3/7. Its function is as follows. Catalyzes a trans-dehydration via an enolate intermediate. This Francisella tularensis subsp. tularensis (strain WY96-3418) protein is 3-dehydroquinate dehydratase.